Here is a 304-residue protein sequence, read N- to C-terminus: HTH-type transcriptional regulator TtuA (304 aa).

The 58-residue stretch at 1–58 (MELEQLKCFVAAAEELHFGRAAQKMGILPASLGRHLRLLEESLGTRLMSRTTRSVALT) folds into the HTH lysR-type domain. The H-T-H motif DNA-binding region spans 18–37 (FGRAAQKMGILPASLGRHLR).

It belongs to the LysR transcriptional regulatory family.

Functionally, transcriptional regulator of the ttuABCDE tartrate utilization operon. The chain is HTH-type transcriptional regulator TtuA (ttuA) from Agrobacterium vitis (Rhizobium vitis).